The primary structure comprises 338 residues: Protein WVD2-like 2 (338 aa).

Residues 1–14 (MGRELVDKHMDKKA) show a composition bias toward basic and acidic residues. A disordered region spans residues 1-150 (MGRELVDKHM…SFSVASSSAT (150 aa)). Polar residues-rich tracts occupy residues 15–37 (NSLTASSTGSSDDNKVPSPSTNE) and 59–69 (QGITETPGSHK). Over residues 100–115 (NNSLGNGASHNSSSAS) the composition is skewed to low complexity. The segment covering 128–138 (RIPDHKMHHDE) has biased composition (basic and acidic residues). Positions 177–214 (REFYQKLEEKQKALEAEKRENEKRLKEEQEAVTKQLRK) form a coiled coil. Positions 222 to 338 (PVPSFYQEGP…GENGVGVVEE (117 aa)) are disordered. Over residues 288-300 (TNSVPRTPNSSSK) the composition is skewed to polar residues.

The protein belongs to the TPX2 family. As to expression, expressed in seedlings.

It is found in the cytoplasm. It localises to the cytoskeleton. In terms of biological role, microtubule-associated protein (MAP) that regulates the orientation of interphase cortical microtubules. This is Protein WVD2-like 2 from Arabidopsis thaliana (Mouse-ear cress).